Here is a 187-residue protein sequence, read N- to C-terminus: Peptidyl-tRNA hydrolase (187 aa).

Y15 provides a ligand contact to tRNA. H20 serves as the catalytic Proton acceptor. TRNA-binding residues include F64, N66, and N112.

It belongs to the PTH family. As to quaternary structure, monomer.

Its subcellular location is the cytoplasm. It carries out the reaction an N-acyl-L-alpha-aminoacyl-tRNA + H2O = an N-acyl-L-amino acid + a tRNA + H(+). In terms of biological role, hydrolyzes ribosome-free peptidyl-tRNAs (with 1 or more amino acids incorporated), which drop off the ribosome during protein synthesis, or as a result of ribosome stalling. Its function is as follows. Catalyzes the release of premature peptidyl moieties from peptidyl-tRNA molecules trapped in stalled 50S ribosomal subunits, and thus maintains levels of free tRNAs and 50S ribosomes. In Parabacteroides distasonis (strain ATCC 8503 / DSM 20701 / CIP 104284 / JCM 5825 / NCTC 11152), this protein is Peptidyl-tRNA hydrolase.